Consider the following 286-residue polypeptide: NAD kinase (286 aa).

The active-site Proton acceptor is the Asp-74. NAD(+) is bound by residues Asp-74–Gly-75, Asn-148–Asp-149, Asp-178, Ala-186, Thr-189–Ser-194, and Gln-244.

It belongs to the NAD kinase family. The cofactor is a divalent metal cation.

It is found in the cytoplasm. The catalysed reaction is NAD(+) + ATP = ADP + NADP(+) + H(+). Its function is as follows. Involved in the regulation of the intracellular balance of NAD and NADP, and is a key enzyme in the biosynthesis of NADP. Catalyzes specifically the phosphorylation on 2'-hydroxyl of the adenosine moiety of NAD to yield NADP. In Campylobacter jejuni subsp. jejuni serotype O:2 (strain ATCC 700819 / NCTC 11168), this protein is NAD kinase.